A 240-amino-acid polypeptide reads, in one-letter code: MKILLIGYGAMNQRVARLAEEKNHEIVGVIVRNSEKHYPYPTFEHISEATEADVAIDFSNPELLLPLLEEDFNLPVVIATTGEKEQIIDKLKALSTDMPVFFSANMSYGVHALTKILEAAVPLLQDFDIELTEAHHNKKVDAPSGTLVKLYDVIESLRETTTPVYDRHETTEKRTQDEIGIHSIRGGTIVGEHDVLFAGTDETIEITHRAQSKDIFANGAISAAEKLVQNKNGYYTFDNL.

NAD(+) contacts are provided by residues 79 to 81 and 103 to 106; these read ATT and SANM. The active-site Proton donor/acceptor is the histidine 135. Histidine 136 contacts (S)-2,3,4,5-tetrahydrodipicolinate. The active-site Proton donor is lysine 139. Residue 145–146 participates in (S)-2,3,4,5-tetrahydrodipicolinate binding; it reads GT.

It belongs to the DapB family.

It is found in the cytoplasm. It carries out the reaction (S)-2,3,4,5-tetrahydrodipicolinate + NAD(+) + H2O = (2S,4S)-4-hydroxy-2,3,4,5-tetrahydrodipicolinate + NADH + H(+). The enzyme catalyses (S)-2,3,4,5-tetrahydrodipicolinate + NADP(+) + H2O = (2S,4S)-4-hydroxy-2,3,4,5-tetrahydrodipicolinate + NADPH + H(+). It participates in amino-acid biosynthesis; L-lysine biosynthesis via DAP pathway; (S)-tetrahydrodipicolinate from L-aspartate: step 4/4. Functionally, catalyzes the conversion of 4-hydroxy-tetrahydrodipicolinate (HTPA) to tetrahydrodipicolinate. The chain is 4-hydroxy-tetrahydrodipicolinate reductase from Staphylococcus saprophyticus subsp. saprophyticus (strain ATCC 15305 / DSM 20229 / NCIMB 8711 / NCTC 7292 / S-41).